Reading from the N-terminus, the 154-residue chain is Superoxide dismutase [Cu-Zn] (154 aa).

Cu cation-binding residues include H47, H49, and H64. A disulfide bridge connects residues C58 and C147. Zn(2+) contacts are provided by H64, H72, H81, and D84. Residue H121 participates in Cu cation binding. Basic and acidic residues predominate over residues 125–136; sequence DDLGKGGNEESL. Positions 125-144 are disordered; that stretch reads DDLGKGGNEESLKTGNAGPR. Residue R144 coordinates substrate.

The protein belongs to the Cu-Zn superoxide dismutase family. As to quaternary structure, homodimer. The cofactor is Cu cation. It depends on Zn(2+) as a cofactor.

Its subcellular location is the cytoplasm. The enzyme catalyses 2 superoxide + 2 H(+) = H2O2 + O2. Its function is as follows. Destroys radicals which are normally produced within the cells and which are toxic to biological systems. In Neurospora crassa (strain ATCC 24698 / 74-OR23-1A / CBS 708.71 / DSM 1257 / FGSC 987), this protein is Superoxide dismutase [Cu-Zn] (sod-1).